Consider the following 197-residue polypeptide: Adrenodoxin-like protein 1, mitochondrial (197 aa).

The transit peptide at 1–35 (MIGHRISRLGSTIVKQLAREGYLATYGTKNLHRSY) directs the protein to the mitochondrion. The region spanning 79–184 (EKITIIFVDK…GVRLAIPSAT (106 aa)) is the 2Fe-2S ferredoxin-type domain. Positions 118, 124, 127, and 165 each coordinate [2Fe-2S] cluster.

It belongs to the adrenodoxin/putidaredoxin family. [2Fe-2S] cluster is required as a cofactor.

The protein localises to the mitochondrion matrix. Functionally, associates in vitro with the adrenodoxin reductase MFDR to form an efficient low potential electron transfer chain that is able to reduce cytochrome C. Functions as accessory mitochondrial protein involved with BIO2 in the plant biotin synthase reaction. In Arabidopsis thaliana (Mouse-ear cress), this protein is Adrenodoxin-like protein 1, mitochondrial.